A 300-amino-acid polypeptide reads, in one-letter code: Mitochondrial GTP/GDP carrier protein 1 (300 aa).

3 Solcar repeats span residues 8–108, 117–198, and 208–293; these read QSGL…KKDF, GKAM…AKEY, and ATWS…LIPR. The next 6 membrane-spanning stretches (helical) occupy residues 14-34, 85-101, 122-142, 173-189, 214-234, and 268-285; these read LLGSASAGIMEIAVFHPVDTI, QRVYKYGGQPFANEFLN, SAAAGSLIGIGEIVLLPLDVL, GWGWTAARNAPGSFALF, FISSIVGACSSLIVSAPLDVI, and GLTPKLLTTGPKLVFSFA.

The protein belongs to the mitochondrial carrier (TC 2.A.29) family.

The protein localises to the mitochondrion inner membrane. Its function is as follows. Mitochondrial GTP/GDP transporter required for GTP uptake and GDP exit from mitochondria. Involved in mitochondrial iron transport and essential for mitochondrial genome maintenance. This Saccharomyces cerevisiae (strain ATCC 204508 / S288c) (Baker's yeast) protein is Mitochondrial GTP/GDP carrier protein 1 (GGC1).